We begin with the raw amino-acid sequence, 668 residues long: GTP-binding protein 1 (668 aa).

Residues 1 to 32 form a disordered region; it reads MAAERSRSPVDSPVPASMFAPEPSSPGAARAA. Residues S6, S8, S12, S24, S25, S44, S47, and S69 each carry the phosphoserine modification. The tr-type G domain occupies 158–389; that stretch reads FLEVRVAVVG…LNLLSPRTSY (232 aa). The tract at residues 167-174 is G1; that stretch reads GNVDAGKS. 167 to 174 serves as a coordination point for GTP; the sequence is GNVDAGKS. The G2 stretch occupies residues 206–210; that stretch reads GRTSS. Positions 252 to 255 are G3; the sequence is DLAG. GTP is bound by residues 252–256 and 308–311; these read DLAGH and TKID. A G4 region spans residues 308–311; sequence TKID. The tract at residues 366-368 is G5; it reads SNV. Over residues 573 to 595 the composition is skewed to polar residues; that stretch reads LLQTTNNSPMNSKPQQIKMQSTK. Residues 573–668 are disordered; it reads LLQTTNNSPM…GACVTPASGC (96 aa). S580 carries the post-translational modification Phosphoserine. The segment covering 609–619 has biased composition (low complexity); sequence GVPAAGGPPTG. Residues 624-637 show a composition bias toward polar residues; the sequence is SLGTAQAASTSGLQ. Residues 646-657 are compositionally biased toward basic residues; that stretch reads GRRRGGQRHKVK.

Belongs to the TRAFAC class translation factor GTPase superfamily. Classic translation factor GTPase family. GTPBP1 subfamily. As to quaternary structure, interacts with EXOSC2/RRP4, EXOSC3/RRP40, EXOSC5/RRP46, HNRNPD, HNRNPR and SYNCRIP. Identified in a complex with AANAT mRNA, but does not bind mRNA by itself. In terms of tissue distribution, detected in some neurons in the brain cortex. Detected in small arteries, dendritic cells and macrophages in the thymus. Detected in lung bronchi, in bronchial epithelial cells and in bronchial smooth muscle cells. Detected in smooth muscle cells in a broad range of organs (at protein level). Expressed in brain, thymus, lung, and kidney.

Its subcellular location is the cytoplasm. Its function is as follows. Promotes degradation of target mRNA species. Plays a role in the regulation of circadian mRNA stability. Binds GTP and has GTPase activity. The sequence is that of GTP-binding protein 1 (Gtpbp1) from Mus musculus (Mouse).